Reading from the N-terminus, the 468-residue chain is Cyclin-T1.1 (468 aa).

Over residues 336 to 354 (KERGVEEERRKRERDRMAG) the composition is skewed to basic and acidic residues. The disordered stretch occupies residues 336-468 (KERGVEEERR…DMDLEDGELE (133 aa)). Residues 387–402 (APPPIPPQLNFPPPPI) show a composition bias toward pro residues. Acidic residues predominate over residues 458–468 (SDMDLEDGELE).

Belongs to the cyclin family. Cyclin C subfamily.

Functionally, regulatory subunit of the cyclin-dependent kinase pair (CDK9/cyclin T) complex, also called positive transcription elongation factor B (P-TEFb), which is proposed to facilitate the transition from abortive to production elongation by phosphorylating the CTD (carboxy-terminal domain) of the large subunit of RNA polymerase II (RNAP II). The polypeptide is Cyclin-T1.1 (Caenorhabditis elegans).